We begin with the raw amino-acid sequence, 168 residues long: Cytochrome c-type biogenesis protein CcmE (168 aa).

At 1 to 7 (MTRKKRR) the chain is on the cytoplasmic side. Residues 8–28 (LYMLGLALLGLGTATALTLSA) form a helical; Signal-anchor for type II membrane protein membrane-spanning segment. Residues 29–168 (FEENIVFFYS…KVHATTTLKP (140 aa)) are Periplasmic-facing. Positions 122 and 126 each coordinate heme. The disordered stretch occupies residues 149 to 168 (SIYTPADSDDKVHATTTLKP).

The protein belongs to the CcmE/CycJ family.

The protein resides in the cell inner membrane. Its function is as follows. Heme chaperone required for the biogenesis of c-type cytochromes. Transiently binds heme delivered by CcmC and transfers the heme to apo-cytochromes in a process facilitated by CcmF and CcmH. This chain is Cytochrome c-type biogenesis protein CcmE, found in Rhodospirillum centenum (strain ATCC 51521 / SW).